The chain runs to 556 residues: Formate--tetrahydrofolate ligase (556 aa).

65–72 (TPAGEGKS) provides a ligand contact to ATP.

The protein belongs to the formate--tetrahydrofolate ligase family.

It catalyses the reaction (6S)-5,6,7,8-tetrahydrofolate + formate + ATP = (6R)-10-formyltetrahydrofolate + ADP + phosphate. It participates in one-carbon metabolism; tetrahydrofolate interconversion. This is Formate--tetrahydrofolate ligase from Streptococcus agalactiae serotype Ia (strain ATCC 27591 / A909 / CDC SS700).